The following is a 61-amino-acid chain: MDPNCSCSTGGSCTCTSSCACKNCKCTSCKKSCCSCCPVGCSKCAQGCVCKGAADKCTCCA.

Met-1 bears the N-acetylmethionine mark. The tract at residues 1–29 (MDPNCSCSTGGSCTCTSSCACKNCKCTSC) is beta. Residues Cys-5, Cys-7, Cys-13, Cys-15, Cys-19, Cys-21, Cys-24, Cys-26, Cys-29, Cys-33, Cys-34, Cys-36, Cys-37, Cys-41, Cys-44, Cys-48, Cys-50, Cys-57, Cys-59, and Cys-60 each coordinate a divalent metal cation. Positions 30–61 (KKSCCSCCPVGCSKCAQGCVCKGAADKCTCCA) are alpha.

The protein belongs to the metallothionein superfamily. Type 1 family.

Functionally, metallothioneins have a high content of cysteine residues that bind various heavy metals; these proteins are transcriptionally regulated by both heavy metals and glucocorticoids. This is Metallothionein-1 (Mt1) from Mus musculus (Mouse).